We begin with the raw amino-acid sequence, 403 residues long: DNA polymerase IV (403 aa).

One can recognise a UmuC domain in the interval 23 to 203 (IAHMDCDAFY…KPVNILPGVG (181 aa)). Aspartate 27 and aspartate 120 together coordinate Mg(2+). The active site involves glutamate 121.

The protein belongs to the DNA polymerase type-Y family. As to quaternary structure, monomer. Mg(2+) serves as cofactor.

The protein localises to the cytoplasm. The catalysed reaction is DNA(n) + a 2'-deoxyribonucleoside 5'-triphosphate = DNA(n+1) + diphosphate. Its function is as follows. Poorly processive, error-prone DNA polymerase involved in untargeted mutagenesis. Copies undamaged DNA at stalled replication forks, which arise in vivo from mismatched or misaligned primer ends. These misaligned primers can be extended by PolIV. Exhibits no 3'-5' exonuclease (proofreading) activity. May be involved in translesional synthesis, in conjunction with the beta clamp from PolIII. This is DNA polymerase IV from Caulobacter vibrioides (strain ATCC 19089 / CIP 103742 / CB 15) (Caulobacter crescentus).